A 192-amino-acid polypeptide reads, in one-letter code: MYQDLIRNELNEAAETLANFLKDDANIHAIQRAAVLLADSFKAGGKVLSCGNGGSHCDAMHFAEELTGRYRENRPGYPAIAISDVSHISCVGNDFGFNDIFSRYVEAVGCEGDVLLGISTSGNSANVIKAIAAAREKGMKVITLTGKDGGKMADTADIEIRVPHFGYADRIQEIHIKVIHILIQLIEKEMVK.

The region spanning 37–192 is the SIS domain; sequence LADSFKAGGK…IQLIEKEMVK (156 aa). Residue 52–54 participates in substrate binding; the sequence is NGG. Residues His61 and Glu65 each contribute to the Zn(2+) site. Substrate is bound by residues Glu65, 93 to 94, 119 to 121, Ser124, and Gln172; these read ND and STS. The Zn(2+) site is built by Gln172 and His180.

This sequence belongs to the SIS family. GmhA subfamily. As to quaternary structure, homotetramer. Requires Zn(2+) as cofactor.

The protein localises to the cytoplasm. The enzyme catalyses 2 D-sedoheptulose 7-phosphate = D-glycero-alpha-D-manno-heptose 7-phosphate + D-glycero-beta-D-manno-heptose 7-phosphate. It participates in carbohydrate biosynthesis; D-glycero-D-manno-heptose 7-phosphate biosynthesis; D-glycero-alpha-D-manno-heptose 7-phosphate and D-glycero-beta-D-manno-heptose 7-phosphate from sedoheptulose 7-phosphate: step 1/1. In terms of biological role, catalyzes the isomerization of sedoheptulose 7-phosphate in D-glycero-D-manno-heptose 7-phosphate. The protein is Phosphoheptose isomerase of Shigella dysenteriae serotype 1 (strain Sd197).